Reading from the N-terminus, the 2138-residue chain is DNA polymerase epsilon catalytic subunit B (2138 aa).

Positions 1224 to 1231 match the Nuclear localization signal 1 motif; sequence EKRKWKMT. The Zn(2+) site is built by Cys2015, Cys2018, Cys2040, and Cys2045. The segment at 2015-2045 adopts a CysA-type zinc-finger fold; the sequence is CSNCGAYRDLDFCRDSALLTEKEWSCADPQC. Residues Cys2076, Cys2079, Cys2091, and Cys2093 each contribute to the [4Fe-4S] cluster site. A CysB motif motif is present at residues 2076 to 2093; it reads CNRCNQVKAAHLTEQCEC. The Nuclear localization signal 2 signature appears at 2107 to 2114; the sequence is HKRIEIFL.

Belongs to the DNA polymerase type-B family. As to quaternary structure, heterotetramer. It depends on [4Fe-4S] cluster as a cofactor. Mostly expressed at low levels in inflorescence (floral meristem and flowers until anthesis), and, to a lower extent, in seeds.

It localises to the nucleus. It carries out the reaction DNA(n) + a 2'-deoxyribonucleoside 5'-triphosphate = DNA(n+1) + diphosphate. Functionally, DNA polymerase II, which participates in chromosomal DNA replication. Involved in the determination of cell fate during plant embryogenesis. Contributes to the flowering time repression. The polypeptide is DNA polymerase epsilon catalytic subunit B (POL2B) (Arabidopsis thaliana (Mouse-ear cress)).